The primary structure comprises 107 residues: Probable 4-amino-4-deoxy-L-arabinose-phosphoundecaprenol flippase subunit ArnE (107 aa).

The 75-residue stretch at 31–105 (RVWGWLALSL…IIVGIILLGG (75 aa)) folds into the EamA domain. 3 helical membrane passes run 34 to 54 (GWLALSLVLLGCAMLLWLFVL), 57 to 77 (VPVSVAYPMLSLNFIFITLAA), and 85 to 105 (IALRHGVGVLLIIVGIILLGG).

Belongs to the ArnE family. Heterodimer of ArnE and ArnF.

Its subcellular location is the cell inner membrane. Its pathway is bacterial outer membrane biogenesis; lipopolysaccharide biosynthesis. In terms of biological role, translocates 4-amino-4-deoxy-L-arabinose-phosphoundecaprenol (alpha-L-Ara4N-phosphoundecaprenol) from the cytoplasmic to the periplasmic side of the inner membrane. This Enterobacter sp. (strain 638) protein is Probable 4-amino-4-deoxy-L-arabinose-phosphoundecaprenol flippase subunit ArnE.